Reading from the N-terminus, the 202-residue chain is MCYGKCARCIGHSLVGLALLCIAANILLYFPNGETKYASENHLSRFVWFFSGIVGGGLLMLLPAFVFIGLEQDDCCGCCGHENCGKRCAMLSSVLAALIGIAGSGYCVIVAALGLAEGPLCLDSLGQWNYTFASTEGQYLLDTSTWSECTEPKHIVEWNVSLFSILLALGGIEFILCLIQVINGVLGGICGFCCSHQQQYDC.

Over 1–9 (MCYGKCARC) the chain is Cytoplasmic. Residues 10–30 (IGHSLVGLALLCIAANILLYF) form a helical membrane-spanning segment. The Extracellular portion of the chain corresponds to 31–49 (PNGETKYASENHLSRFVWF). The chain crosses the membrane as a helical span at residues 50-70 (FSGIVGGGLLMLLPAFVFIGL). Residues 71–93 (EQDDCCGCCGHENCGKRCAMLSS) are Cytoplasmic-facing. A helical transmembrane segment spans residues 94-114 (VLAALIGIAGSGYCVIVAALG). Topologically, residues 115-161 (LAEGPLCLDSLGQWNYTFASTEGQYLLDTSTWSECTEPKHIVEWNVS) are extracellular. 2 N-linked (GlcNAc...) asparagine glycosylation sites follow: Asn129 and Asn159. Residues 162–182 (LFSILLALGGIEFILCLIQVI) form a helical membrane-spanning segment. The Cytoplasmic segment spans residues 183–202 (NGVLGGICGFCCSHQQQYDC).

Belongs to the L6 tetraspanin family. As to quaternary structure, present in high molecular weight complexes in tumor cells. Interacts with SDCBP2. Highly expressed in lung, breast, colon and ovarian carcinomas. It is also present on some normal cells, endothelial cells in particular.

It localises to the membrane. This is Transmembrane 4 L6 family member 1 (TM4SF1) from Homo sapiens (Human).